A 911-amino-acid chain; its full sequence is Viral IRF4-like protein (911 aa).

Positions 7–114 (SEWATLWIID…GSYVVWQLVR (108 aa)) form a DNA-binding region, IRF tryptophan pentad repeat. Disordered regions lie at residues 147–184 (TTAT…PRKS), 211–302 (ASTS…SRLP), 494–537 (GGAP…PYVC), and 681–727 (ELQE…FFDP). The span at 211–221 (ASTSGMGSSGT) shows a compositional bias: low complexity. Polar residues-rich tracts occupy residues 222-231 (RQVTQASSFT) and 495-505 (GAPNQGLSHTQ). Residues 697-710 (RRPRSRSPHGRRTP) show a composition bias toward basic residues.

Belongs to the IRF family. In terms of assembly, interacts with host MDM2; this interaction facilitates the proteasomal degradation of TP53/p53. Interacts with host IRF7; this interaction prevents IRF7 dimerization and subsequent activation.

The protein localises to the host nucleus. Functionally, plays a role in host cell apoptosis modulation by promoting TP53/p53 ubiquitination and subsequent degradation and thus down-regulating TP53/p53-mediated apoptosis. Works as a potential viral transcription factor to modulate host gene expression to build favorable environments for the viral lytic life cycle and greatly accelerates the induction of an immediate early gene RTA, early genes ORF36 and ORF57, late genes ORF25 and ORF64, and latent genes LANA1 and v-IRF3. Inhibits host interferon-alpha production by interacting with host IRF7 and preventing IRF7 dimerization. The protein is Viral IRF4-like protein (vIRF-4) of Homo sapiens (Human).